A 284-amino-acid polypeptide reads, in one-letter code: Bifunctional protein FolD (284 aa).

Residues 165 to 167 and S190 each bind NADP(+); that span reads GRS.

Belongs to the tetrahydrofolate dehydrogenase/cyclohydrolase family. Homodimer.

It carries out the reaction (6R)-5,10-methylene-5,6,7,8-tetrahydrofolate + NADP(+) = (6R)-5,10-methenyltetrahydrofolate + NADPH. The catalysed reaction is (6R)-5,10-methenyltetrahydrofolate + H2O = (6R)-10-formyltetrahydrofolate + H(+). It participates in one-carbon metabolism; tetrahydrofolate interconversion. In terms of biological role, catalyzes the oxidation of 5,10-methylenetetrahydrofolate to 5,10-methenyltetrahydrofolate and then the hydrolysis of 5,10-methenyltetrahydrofolate to 10-formyltetrahydrofolate. The sequence is that of Bifunctional protein FolD from Streptococcus uberis (strain ATCC BAA-854 / 0140J).